The primary structure comprises 61 residues: Conotoxin TeAr154 (61 aa).

The signal sequence occupies residues 1-19 (MHCLPVFVILLLLTASGLS). The propeptide occupies 20 to 47 (VDARPKTEDDVPLSSFRDNTKSTLQRLL). 4-carboxyglutamate is present on glutamate 57.

In terms of processing, contains 2 disulfide bonds that can be either 'C1-C3, C2-C4' or 'C1-C4, C2-C3', since these disulfide connectivities have been observed for conotoxins with cysteine framework V (for examples, see AC P0DQQ7 and AC P81755). Post-translationally, contains 2 disulfide bonds. Expressed by the venom duct.

It localises to the secreted. This Conus textile (Cloth-of-gold cone) protein is Conotoxin TeAr154.